The primary structure comprises 776 residues: Glucocorticoid receptor (776 aa).

Disordered regions lie at residues 1-25, 47-86, and 394-415; these read MDPKDLLKPSSGSPAVRGSPHYNDK, SCPTSTASQSNTRQQQHFQKQLTATGDSTNGLNNNVPQPD, and SSPGIRSDASPSPSTSSTSTGP. A modulating region spans residues 1–419; that stretch reads MDPKDLLKPS…STSTGPPPKL (419 aa). Positions 47–83 are enriched in polar residues; the sequence is SCPTSTASQSNTRQQQHFQKQLTATGDSTNGLNNNVP. A compositionally biased stretch (low complexity) spans 403-413; that stretch reads SPSPSTSSTST. 2 consecutive NR C4-type zinc fingers follow at residues 420 to 440 and 456 to 480; these read CLVCSDEASGCHYGVLTCGSC and CAGRNDCIIDKIRRKNCPACRYRKC. A DNA-binding region (nuclear receptor) is located at residues 420-485; that stretch reads CLVCSDEASG…RYRKCLQAGM (66 aa). Residues 486–522 form a hinge region; the sequence is NLEARKTKKKIKGIQQSTTATARESPETSMTRTLVPA. An NR LBD domain is found at 523–757; the sequence is SVAQLTPTLI…FPDMLSEIIS (235 aa).

The protein belongs to the nuclear hormone receptor family. NR3 subfamily. Heteromultimeric cytoplasmic complex with HSP90. Upon ligand binding the complex undergoes a conformation change and moves to the nucleus, where it dissociates. Binds to DNA as a homodimer, and as heterodimer with NR3C2. Interaction with numerous other transcription factors modulates transcription activation. As to expression, expressed in liver with relative abundance.

The protein resides in the cytoplasm. Its subcellular location is the nucleus. It is found in the mitochondrion. The protein localises to the cytoskeleton. It localises to the spindle. The protein resides in the microtubule organizing center. Its subcellular location is the centrosome. In terms of biological role, receptor for glucocorticoids (GC). Has a dual mode of action: as a transcription factor that binds to glucocorticoid response elements (GRE), both for nuclear and mitochondrial DNA, and as a modulator of other transcription factors. Affects inflammatory responses, cellular proliferation and differentiation in target tissues. Involved in chromatin remodeling. Plays a role in rapid mRNA degradation by binding to the 5' UTR of target mRNAs and interacting with PNRC2 in a ligand-dependent manner which recruits the RNA helicase UPF1 and the mRNA-decapping enzyme DCP1A, leading to RNA decay. Could act as a coactivator for STAT5-dependent transcription upon growth hormone (GH) stimulation and could reveal an essential role of hepatic GR in the control of body growth. Mediates glucocorticoid-induced apoptosis. Promotes accurate chromosome segregation during mitosis. May act as a tumor suppressor. May play a negative role in adipogenesis through the regulation of lipolytic and antilipogenic gene expression. The chain is Glucocorticoid receptor (nr3c1) from Xenopus laevis (African clawed frog).